The chain runs to 979 residues: Zinc finger protein 280D (979 aa).

Residues K32, K34, K74, and K87 each participate in a glycyl lysine isopeptide (Lys-Gly) (interchain with G-Cter in SUMO2) cross-link. Residues 89 to 101 show a composition bias toward polar residues; it reads TSQHYTNPTSNPV. The disordered stretch occupies residues 89–119; sequence TSQHYTNPTSNPVPASPINFHPESRSSDSSV. The residue at position 104 (S104) is a Phosphoserine. Residues K126 and K140 each participate in a glycyl lysine isopeptide (Lys-Gly) (interchain with G-Cter in SUMO2) cross-link. A disordered region spans residues 157 to 236; that stretch reads YQGGPTLSMA…TSSNQSKNGT (80 aa). The segment covering 169–187 has biased composition (polar residues); that stretch reads SESSFLSKRPSTSEVNNVN. Residues K189, K210, K223, K233, K275, K284, and K292 each participate in a glycyl lysine isopeptide (Lys-Gly) (interchain with G-Cter in SUMO2) cross-link. The span at 195–235 shows a compositional bias: polar residues; sequence ESVSGANSSAVLPSVKSPSVTSSQAMLAKGTNTSSNQSKNG. 2 consecutive C2H2-type zinc fingers follow at residues 321–343 and 358–381; these read FKCF…MKHH and TTCQ…ESTH. A C2H2-type 3; degenerate zinc finger spans residues 388-412; sequence TICKICELSFETEHVLLQHMKDNHK. 2 consecutive C2H2-type zinc fingers follow at residues 418–441 and 449–469; these read YVCQ…RTSH and CPFC…YMKH. Disordered stretches follow at residues 523-608, 739-809, and 896-979; these read GPLQ…NKKS, LKKE…SDKE, and FLRK…KERS. A compositionally biased stretch (low complexity) spans 527–541; that stretch reads SGASPTPSISASAST. 2 stretches are compositionally biased toward polar residues: residues 542–584 and 592–608; these read LQLS…NGSK and SNMQ…NKKS. Position 545 is a phosphoserine (S545). K550 participates in a covalent cross-link: Glycyl lysine isopeptide (Lys-Gly) (interchain with G-Cter in SUMO2). Residues 739 to 784 are compositionally biased toward basic and acidic residues; the sequence is LKKEAPAKEQEPVSKEIARPNMAERETETSNSESKQDKAASSKEKN. K740 participates in a covalent cross-link: Glycyl lysine isopeptide (Lys-Gly) (interchain with G-Cter in SUMO2). Residues 786-797 are compositionally biased toward polar residues; that stretch reads CNANSFEGSSTT. The segment covering 798 to 809 has biased composition (basic and acidic residues); sequence KSEESITVSDKE. Residues 905 to 914 are compositionally biased toward polar residues; that stretch reads SVSSDVSEQG. A phosphoserine mark is found at S908 and S911. Over residues 970–979 the composition is skewed to acidic residues; that stretch reads VDLEDEKERS. A Glycyl lysine isopeptide (Lys-Gly) (interchain with G-Cter in SUMO2) cross-link involves residue K976.

The protein resides in the nucleus. In terms of biological role, may function as a transcription factor. This chain is Zinc finger protein 280D (ZNF280D), found in Homo sapiens (Human).